The following is a 461-amino-acid chain: Argininosuccinate lyase (461 aa).

This sequence belongs to the lyase 1 family. Argininosuccinate lyase subfamily.

It is found in the cytoplasm. The catalysed reaction is 2-(N(omega)-L-arginino)succinate = fumarate + L-arginine. It functions in the pathway amino-acid biosynthesis; L-arginine biosynthesis; L-arginine from L-ornithine and carbamoyl phosphate: step 3/3. This Chloroflexus aurantiacus (strain ATCC 29366 / DSM 635 / J-10-fl) protein is Argininosuccinate lyase.